A 130-amino-acid polypeptide reads, in one-letter code: Small ribosomal subunit protein uS8 (130 aa).

This sequence belongs to the universal ribosomal protein uS8 family. In terms of assembly, part of the 30S ribosomal subunit.

One of the primary rRNA binding proteins, it binds directly to 16S rRNA central domain where it helps coordinate assembly of the platform of the 30S subunit. This chain is Small ribosomal subunit protein uS8, found in Pyrobaculum arsenaticum (strain DSM 13514 / JCM 11321 / PZ6).